A 99-amino-acid polypeptide reads, in one-letter code: Putative septation protein SpoVG (99 aa).

The protein belongs to the SpoVG family.

Functionally, could be involved in septation. The chain is Putative septation protein SpoVG from Aster yellows witches'-broom phytoplasma (strain AYWB).